Consider the following 440-residue polypeptide: Deoxyguanosinetriphosphate triphosphohydrolase-like protein (440 aa).

In terms of domain architecture, HD spans 62-255; it reads RLTHSLEAAQ…MELADDIAYG (194 aa).

The protein belongs to the dGTPase family. Type 2 subfamily.

This chain is Deoxyguanosinetriphosphate triphosphohydrolase-like protein, found in Vibrio parahaemolyticus serotype O3:K6 (strain RIMD 2210633).